Reading from the N-terminus, the 1072-residue chain is Carbamoyl phosphate synthase large chain (1072 aa).

The carboxyphosphate synthetic domain stretch occupies residues 1-401 (MPKRLDINTI…SLLKAVRSLE (401 aa)). Residues Arg129, Arg169, Gly175, Gly176, Lys208, Ile210, Glu215, Gly241, Val242, His243, Gln284, and Glu298 each contribute to the ATP site. Positions 133–327 (RTLMQDLNEP…IAKLAAKIAV (195 aa)) constitute an ATP-grasp 1 domain. Residues Gln284, Glu298, and Asn300 each coordinate Mg(2+). Mn(2+) contacts are provided by Gln284, Glu298, and Asn300. The segment at 402–546 (LGIYHLELDH…YSTYADENES (145 aa)) is oligomerization domain. The tract at residues 547-929 (IVTDRKSVVV…ALYKGLVASG (383 aa)) is carbamoyl phosphate synthetic domain. Residues 671-861 (EAALTKLGIP…MANVATKVIL (191 aa)) form the ATP-grasp 2 domain. The ATP site is built by Arg707, Arg746, Glu752, Gly777, Val778, His779, Ser780, Gln820, and Glu832. Residues Gln820, Glu832, and Asn834 each coordinate Mg(2+). Mn(2+) contacts are provided by Gln820, Glu832, and Asn834. The 143-residue stretch at 930 to 1072 (INIPTHGSVI…QTKRHEVVHA (143 aa)) folds into the MGS-like domain. The tract at residues 930 to 1072 (INIPTHGSVI…QTKRHEVVHA (143 aa)) is allosteric domain.

The protein belongs to the CarB family. In terms of assembly, composed of two chains; the small (or glutamine) chain promotes the hydrolysis of glutamine to ammonia, which is used by the large (or ammonia) chain to synthesize carbamoyl phosphate. Tetramer of heterodimers (alpha,beta)4. It depends on Mg(2+) as a cofactor. Mn(2+) is required as a cofactor.

The catalysed reaction is hydrogencarbonate + L-glutamine + 2 ATP + H2O = carbamoyl phosphate + L-glutamate + 2 ADP + phosphate + 2 H(+). The enzyme catalyses hydrogencarbonate + NH4(+) + 2 ATP = carbamoyl phosphate + 2 ADP + phosphate + 2 H(+). Its pathway is amino-acid biosynthesis; L-arginine biosynthesis; carbamoyl phosphate from bicarbonate: step 1/1. The protein operates within pyrimidine metabolism; UMP biosynthesis via de novo pathway; (S)-dihydroorotate from bicarbonate: step 1/3. In terms of biological role, large subunit of the glutamine-dependent carbamoyl phosphate synthetase (CPSase). CPSase catalyzes the formation of carbamoyl phosphate from the ammonia moiety of glutamine, carbonate, and phosphate donated by ATP, constituting the first step of 2 biosynthetic pathways, one leading to arginine and/or urea and the other to pyrimidine nucleotides. The large subunit (synthetase) binds the substrates ammonia (free or transferred from glutamine from the small subunit), hydrogencarbonate and ATP and carries out an ATP-coupled ligase reaction, activating hydrogencarbonate by forming carboxy phosphate which reacts with ammonia to form carbamoyl phosphate. The polypeptide is Carbamoyl phosphate synthase large chain (Bacillus cereus (strain ATCC 14579 / DSM 31 / CCUG 7414 / JCM 2152 / NBRC 15305 / NCIMB 9373 / NCTC 2599 / NRRL B-3711)).